A 361-amino-acid chain; its full sequence is Chorismate synthase (361 aa).

Arginine 48 lines the NADP(+) pocket. Residues arginine 125 to serine 127, asparagine 238 to alanine 239, glycine 278, lysine 293 to serine 297, and arginine 319 contribute to the FMN site.

It belongs to the chorismate synthase family. As to quaternary structure, homotetramer. The cofactor is FMNH2.

The catalysed reaction is 5-O-(1-carboxyvinyl)-3-phosphoshikimate = chorismate + phosphate. Its pathway is metabolic intermediate biosynthesis; chorismate biosynthesis; chorismate from D-erythrose 4-phosphate and phosphoenolpyruvate: step 7/7. Functionally, catalyzes the anti-1,4-elimination of the C-3 phosphate and the C-6 proR hydrogen from 5-enolpyruvylshikimate-3-phosphate (EPSP) to yield chorismate, which is the branch point compound that serves as the starting substrate for the three terminal pathways of aromatic amino acid biosynthesis. This reaction introduces a second double bond into the aromatic ring system. This chain is Chorismate synthase, found in Vibrio anguillarum (strain ATCC 68554 / 775) (Listonella anguillarum).